We begin with the raw amino-acid sequence, 704 residues long: Polyribonucleotide nucleotidyltransferase (704 aa).

Positions 488 and 494 each coordinate Mg(2+). Positions 555–614 (PRITTLKINPEKIRDVIGKGGATIRALTEETGTTIELEDDGTVKIASANGDATKEAIRRI) constitute a KH domain. Residues 624–692 (GTIYNGKVVR…RQGRVRLSMK (69 aa)) form the S1 motif domain.

Belongs to the polyribonucleotide nucleotidyltransferase family. Component of the RNA degradosome, which is a multiprotein complex involved in RNA processing and mRNA degradation. The cofactor is Mg(2+).

The protein localises to the cytoplasm. The catalysed reaction is RNA(n+1) + phosphate = RNA(n) + a ribonucleoside 5'-diphosphate. Its function is as follows. Involved in mRNA degradation. Catalyzes the phosphorolysis of single-stranded polyribonucleotides processively in the 3'- to 5'-direction. This is Polyribonucleotide nucleotidyltransferase from Shewanella sediminis (strain HAW-EB3).